The primary structure comprises 234 residues: Sugar fermentation stimulation protein A (234 aa).

Residues 201–220 (LLSEAQNKGVEVLAYKAELS) constitute a DNA-binding region (H-T-H motif).

The protein belongs to the SfsA family.

In terms of biological role, binds to DNA non-specifically. Could be a regulatory factor involved in maltose metabolism. In Salmonella agona (strain SL483), this protein is Sugar fermentation stimulation protein A.